The primary structure comprises 142 residues: Hemoglobin subunit alpha (142 aa).

A Globin domain is found at 2–142 (VLSPADKTNV…VSTVLTSKYR (141 aa)). Phosphoserine is present on S4. K8 carries the N6-succinyllysine modification. Position 9 is a phosphothreonine (T9). An N6-succinyllysine modification is found at K12. The residue at position 17 (K17) is an N6-acetyllysine; alternate. An N6-succinyllysine; alternate modification is found at K17. The residue at position 25 (Y25) is a Phosphotyrosine. S36 is modified (phosphoserine). K41 carries the post-translational modification N6-succinyllysine. The residue at position 50 (S50) is a Phosphoserine. Position 59 (H59) interacts with O2. Residue H88 coordinates heme b. S103 bears the Phosphoserine mark. T109 carries the post-translational modification Phosphothreonine. Position 125 is a phosphoserine (S125). Phosphothreonine occurs at positions 135 and 138. The residue at position 139 (S139) is a Phosphoserine.

The protein belongs to the globin family. In terms of assembly, heterotetramer of two alpha chains and two beta chains. In terms of tissue distribution, red blood cells.

Involved in oxygen transport from the lung to the various peripheral tissues. Functionally, hemopressin acts as an antagonist peptide of the cannabinoid receptor CNR1. Hemopressin-binding efficiently blocks cannabinoid receptor CNR1 and subsequent signaling. The sequence is that of Hemoglobin subunit alpha (HBA) from Ailuropoda melanoleuca (Giant panda).